The primary structure comprises 507 residues: AMSH-like ubiquitin thioesterase 1 (507 aa).

An MPN domain is found at 333–463 (LHIATSMMDT…IFRLTTPGGM (131 aa)). Zn(2+) is bound by residues H411, H413, D424, H426, C469, H475, and H477. Positions 411-424 (HTHPTQSCFMSSID) match the JAMM motif motif.

It belongs to the peptidase M67C family. It depends on Zn(2+) as a cofactor.

The protein localises to the membrane. Its subcellular location is the cytoplasm. Its function is as follows. Zinc metalloprotease that cleaves 'Lys-48'- and 'Lys-63'-linked polyubiquitin chains. This is AMSH-like ubiquitin thioesterase 1 (AMSH1) from Arabidopsis thaliana (Mouse-ear cress).